We begin with the raw amino-acid sequence, 292 residues long: Ribosomal protein L11 methyltransferase (292 aa).

Thr136, Gly159, Asp181, and Asn228 together coordinate S-adenosyl-L-methionine.

This sequence belongs to the methyltransferase superfamily. PrmA family.

Its subcellular location is the cytoplasm. It catalyses the reaction L-lysyl-[protein] + 3 S-adenosyl-L-methionine = N(6),N(6),N(6)-trimethyl-L-lysyl-[protein] + 3 S-adenosyl-L-homocysteine + 3 H(+). Functionally, methylates ribosomal protein L11. The sequence is that of Ribosomal protein L11 methyltransferase from Agrobacterium fabrum (strain C58 / ATCC 33970) (Agrobacterium tumefaciens (strain C58)).